We begin with the raw amino-acid sequence, 315 residues long: MSESLKIIFAGTPDFAARHLDALLSSGHQVVGVFTQPDRPAGRGNRVTASPVKQLAAQHNIPVFQPESLRSEENQQKVAALNADVMVVVAYGLILPKLVLEMPRHGCINVHGSLLPRWRGAAPIQRSLWAGDAETGVTIMQMDIGLDTGDMLHKLSCPIEAADTSATLYDKLADLGPAGLLTTLAQLADGSARPQVQDESLVSYAEKLSKEEARLDWSLSAQQLERCIRAFNPWPISYFVIDEQPVKVWKASVLPAVNGHQPGEILQANKQGIQVVTADGVLNIEELQPAGKKAMKAQDLLNSRREWFTPGNIIA.

(6S)-5,6,7,8-tetrahydrofolate is bound at residue Ser113–Pro116.

The protein belongs to the Fmt family.

The enzyme catalyses L-methionyl-tRNA(fMet) + (6R)-10-formyltetrahydrofolate = N-formyl-L-methionyl-tRNA(fMet) + (6S)-5,6,7,8-tetrahydrofolate + H(+). In terms of biological role, attaches a formyl group to the free amino group of methionyl-tRNA(fMet). The formyl group appears to play a dual role in the initiator identity of N-formylmethionyl-tRNA by promoting its recognition by IF2 and preventing the misappropriation of this tRNA by the elongation apparatus. The chain is Methionyl-tRNA formyltransferase from Erwinia tasmaniensis (strain DSM 17950 / CFBP 7177 / CIP 109463 / NCPPB 4357 / Et1/99).